A 272-amino-acid polypeptide reads, in one-letter code: NH(3)-dependent NAD(+) synthetase (272 aa).

Residue Tyr-33 participates in deamido-NAD(+) binding. Residues 45–52, Arg-79, and Gln-85 contribute to the ATP site; that span reads GISGGQDS. Asp-51 lines the Mg(2+) pocket. Arg-138 contacts deamido-NAD(+). ATP is bound at residue Thr-158. Mg(2+) is bound at residue Glu-163. 2 residues coordinate deamido-NAD(+): Lys-171 and Asp-178. Residues Lys-187 and Thr-209 each coordinate ATP. Deamido-NAD(+) is bound by residues Glu-224 and 258–259; that span reads HK.

The protein belongs to the NAD synthetase family. As to quaternary structure, homodimer. Post-translationally, phosphorylated during sporulation.

It carries out the reaction deamido-NAD(+) + NH4(+) + ATP = AMP + diphosphate + NAD(+) + H(+). It participates in cofactor biosynthesis; NAD(+) biosynthesis; NAD(+) from deamido-NAD(+) (ammonia route): step 1/1. Its function is as follows. Catalyzes the ATP-dependent amidation of deamido-NAD to form NAD. Uses ammonia as a nitrogen source. In Bacillus subtilis (strain 168), this protein is NH(3)-dependent NAD(+) synthetase.